A 550-amino-acid polypeptide reads, in one-letter code: Glucose-6-phosphate isomerase (550 aa).

Glu356 functions as the Proton donor in the catalytic mechanism. Active-site residues include His387 and Lys515.

It belongs to the GPI family.

It localises to the cytoplasm. It catalyses the reaction alpha-D-glucose 6-phosphate = beta-D-fructose 6-phosphate. It participates in carbohydrate biosynthesis; gluconeogenesis. The protein operates within carbohydrate degradation; glycolysis; D-glyceraldehyde 3-phosphate and glycerone phosphate from D-glucose: step 2/4. Its function is as follows. Catalyzes the reversible isomerization of glucose-6-phosphate to fructose-6-phosphate. This Vibrio atlanticus (strain LGP32) (Vibrio splendidus (strain Mel32)) protein is Glucose-6-phosphate isomerase.